We begin with the raw amino-acid sequence, 832 residues long: Translation initiation factor IF-2 (832 aa).

Positions 1 to 10 are enriched in basic and acidic residues; the sequence is MLMSDVEKFG. Disordered regions lie at residues 1–87, 120–148, and 163–201; these read MLMS…SRSA, RDEE…PAAA, and IAPG…GGGG. Gly residues predominate over residues 11-20; sequence GDCGSSGGSG. Composition is skewed to polar residues over residues 29–42 and 71–87; these read RAST…STGG and SPYT…SRSA. In terms of domain architecture, tr-type G spans 331-500; it reads PRPPVVTVMG…LLLAEMLELR (170 aa). The segment at 340-347 is G1; the sequence is GHVDHGKT. 340-347 contacts GTP; sequence GHVDHGKT. The tract at residues 365-369 is G2; sequence GITQH. Positions 386–389 are G3; that stretch reads DTPG. GTP-binding positions include 386–390 and 440–443; these read DTPGH and NKID. The tract at residues 440 to 443 is G4; it reads NKID. Positions 476–478 are G5; sequence SAK.

The protein belongs to the TRAFAC class translation factor GTPase superfamily. Classic translation factor GTPase family. IF-2 subfamily.

Its subcellular location is the cytoplasm. In terms of biological role, one of the essential components for the initiation of protein synthesis. Protects formylmethionyl-tRNA from spontaneous hydrolysis and promotes its binding to the 30S ribosomal subunits. Also involved in the hydrolysis of GTP during the formation of the 70S ribosomal complex. The polypeptide is Translation initiation factor IF-2 (Anaplasma marginale (strain St. Maries)).